Here is a 99-residue protein sequence, read N- to C-terminus: Large ribosomal subunit protein uL23 (99 aa).

The protein belongs to the universal ribosomal protein uL23 family. As to quaternary structure, part of the 50S ribosomal subunit. Contacts protein L29, and trigger factor when it is bound to the ribosome.

In terms of biological role, one of the early assembly proteins it binds 23S rRNA. One of the proteins that surrounds the polypeptide exit tunnel on the outside of the ribosome. Forms the main docking site for trigger factor binding to the ribosome. This Shewanella loihica (strain ATCC BAA-1088 / PV-4) protein is Large ribosomal subunit protein uL23.